The primary structure comprises 652 residues: Leucine-rich repeat-containing protein 4 (652 aa).

An N-terminal signal peptide occupies residues 1–40 (MKLLWQVTVHHTWNAVLLPVVYLTAQVWILCAAIAAAASA). Topologically, residues 1–526 (MKLLWQVTVH…SLDEVMKTTK (526 aa)) are extracellular. An LRRNT domain is found at 41-74 (GPQNCPSVCSCSNQFSKVVCTRRGLSEVPQGIPS). Cystine bridges form between C45/C51 and C49/C60. LRR repeat units lie at residues 75-96 (NTRY…TFRH), 99-120 (HLEV…AFNG), 123-144 (SLNT…AFEY), 147-168 (KLRE…AFNR), 171-193 (SLMR…AFEG), 196-217 (NLKY…TPLV), 218-239 (GLEE…SFHG), 242-263 (SLKK…AFDG), and 266-287 (SLVE…LFTP). In terms of domain architecture, LRRCT spans 299–351 (NPWNCDCDILWLAWWLREYIPTNSTCCGRCHAPMHMRGRYLVEVDQASFQCSA). Cystine bridges form between C303–C328 and C305–C349. 2 N-linked (GlcNAc...) asparagine glycosylation sites follow: N321 and N362. The Ig-like C2-type domain maps to 352–441 (PFIMDAPRDL…SNASAYLNVS (90 aa)). A disulfide bridge links C373 with C423. Residues 527 to 547 (IIIGCFVAVTLLAAAMLIVFY) form a helical membrane-spanning segment. Residues 548 to 652 (KLRKRHQQRS…TKDKVQETQI (105 aa)) are Cytoplasmic-facing.

In terms of assembly, interacts (via LRR repeats) with NTNG2. Interacts with DLG4. Found in a complex with NMDA receptors. Post-translationally, N-glycosylated. In terms of tissue distribution, mainly expressed in the brain. Expression is concentrated in the olfactory bulb, cortex, hippocampus and cerebellum in adult brain. Detected both embryonically and postnatally with stronger expression in postnatal stages.

It localises to the membrane. The protein localises to the postsynaptic cell membrane. Its function is as follows. Synaptic adhesion protein. Regulates the formation of exitatory synapses through the recruitment of pre-and-postsynaptic proteins. Organize the lamina/pathway-specific differentiation of dendrites. Plays an important role for auditory synaptic responses. Involved in the suppression of glioma. In Rattus norvegicus (Rat), this protein is Leucine-rich repeat-containing protein 4 (Lrrc4).